A 133-amino-acid polypeptide reads, in one-letter code: Thioredoxin-like protein CXXS1 (133 aa).

One can recognise a Thioredoxin domain in the interval 1–120 (MEIQQQKGVG…VKKMVDASAE (120 aa)).

Belongs to the thioredoxin family.

The sequence is that of Thioredoxin-like protein CXXS1 from Oryza sativa subsp. japonica (Rice).